The chain runs to 445 residues: uncharacterized protein (445 aa).

Helical transmembrane passes span 16-36 (IVSLGVTASSFLFINGVAFLI), 52-72 (LLASMPSWGLVVTMFAWGYLL), 98-118 (VHSLLWIGVFLFLGGMAAGGC), 168-188 (GLMFPAVVCTLAAVASVLGIV), 219-239 (ASALLMMPQTVTVTFMLVWLI), 243-263 (GWSVAQAGVLVTISQLLGALG), 283-303 (LIAAAAAATLFLLAAVDNEGS), and 366-386 (AAYPTAWALCGVFPLAAVPLV). The tract at residues 417 to 445 (AWPNGPRRPGPPGQPRRVRQGGTAITPPT) is disordered.

Belongs to the major facilitator superfamily.

It is found in the cell membrane. This is an uncharacterized protein from Mycobacterium tuberculosis (strain CDC 1551 / Oshkosh).